The sequence spans 318 residues: Formimidoylglutamase (318 aa).

Histidine 130, aspartate 155, histidine 157, aspartate 159, aspartate 246, and aspartate 248 together coordinate Mn(2+).

It belongs to the arginase family. Mn(2+) serves as cofactor.

It catalyses the reaction N-formimidoyl-L-glutamate + H2O = formamide + L-glutamate. It functions in the pathway amino-acid degradation; L-histidine degradation into L-glutamate; L-glutamate from N-formimidoyl-L-glutamate (hydrolase route): step 1/1. Its function is as follows. Catalyzes the conversion of N-formimidoyl-L-glutamate to L-glutamate and formamide. This Photorhabdus laumondii subsp. laumondii (strain DSM 15139 / CIP 105565 / TT01) (Photorhabdus luminescens subsp. laumondii) protein is Formimidoylglutamase.